We begin with the raw amino-acid sequence, 321 residues long: Cytochrome c biogenesis protein CcsA (321 aa).

A run of 7 helical transmembrane segments spans residues 9-29 (ILTHISFSTISIVITIHLITL), 44-64 (GMIATFFSITGFLVSRWVSSG), 68-88 (LSNLYESLIFLSWTLYILHTI), 143-163 (MLLSYATLLCGSLLSAALLII), 225-245 (VISLGFTLLTVGILCGAVWAN), 259-273 (TWAFITWTIFAIYLH), and 288-308 (VASIGFLIIWICYFGINLLGI).

Belongs to the CcmF/CycK/Ccl1/NrfE/CcsA family. As to quaternary structure, may interact with Ccs1.

Its subcellular location is the plastid. The protein resides in the chloroplast thylakoid membrane. In terms of biological role, required during biogenesis of c-type cytochromes (cytochrome c6 and cytochrome f) at the step of heme attachment. This Saccharum hybrid (Sugarcane) protein is Cytochrome c biogenesis protein CcsA.